The sequence spans 420 residues: Glucose-1-phosphate adenylyltransferase (420 aa).

Residues Tyr-107, Gly-173, 188 to 189 (EK), and Ser-206 contribute to the alpha-D-glucose 1-phosphate site.

This sequence belongs to the bacterial/plant glucose-1-phosphate adenylyltransferase family. Homotetramer.

It catalyses the reaction alpha-D-glucose 1-phosphate + ATP + H(+) = ADP-alpha-D-glucose + diphosphate. The protein operates within glycan biosynthesis; glycogen biosynthesis. Involved in the biosynthesis of ADP-glucose, a building block required for the elongation reactions to produce glycogen. Catalyzes the reaction between ATP and alpha-D-glucose 1-phosphate (G1P) to produce pyrophosphate and ADP-Glc. This chain is Glucose-1-phosphate adenylyltransferase, found in Shewanella sp. (strain MR-4).